The primary structure comprises 525 residues: Lysine--tRNA ligase (525 aa).

Residues E430 and E437 each contribute to the Mg(2+) site.

It belongs to the class-II aminoacyl-tRNA synthetase family. As to quaternary structure, homodimer. Mg(2+) serves as cofactor.

It localises to the cytoplasm. The catalysed reaction is tRNA(Lys) + L-lysine + ATP = L-lysyl-tRNA(Lys) + AMP + diphosphate. The protein is Lysine--tRNA ligase of Chlamydia caviae (strain ATCC VR-813 / DSM 19441 / 03DC25 / GPIC) (Chlamydophila caviae).